Reading from the N-terminus, the 161-residue chain is MAEQNQRTNTPDNGPEFAIQRLYIKDLSFEAPRSPQVFLEEWQPELNMDLATKVNDLGEDNHEVVLTVTVTVTMKESHIFLAEVQQGGIFTIKNFPKEEMRPMLGSFCPNILYPYAREAITDMVVRGGFPQLYLAPVNFDALFEQHEQSEEGNSGTEDRVH.

This sequence belongs to the SecB family. In terms of assembly, homotetramer, a dimer of dimers. One homotetramer interacts with 1 SecA dimer.

It is found in the cytoplasm. Functionally, one of the proteins required for the normal export of preproteins out of the cell cytoplasm. It is a molecular chaperone that binds to a subset of precursor proteins, maintaining them in a translocation-competent state. It also specifically binds to its receptor SecA. This chain is Protein-export protein SecB, found in Coxiella burnetii (strain Dugway 5J108-111).